A 418-amino-acid polypeptide reads, in one-letter code: cAMP-dependent protein kinase type II-beta regulatory subunit (418 aa).

Residues Ser2–Leu153 form a dimerization and phosphorylation region. Positions Thr48–Thr57 are enriched in basic and acidic residues. The tract at residues Thr48–Ala96 is disordered. Residue Thr69 is modified to Phosphothreonine. A phosphoserine mark is found at Ser83, Ser85, and Ser114. Over residues Asp84 to Ala94 the composition is skewed to acidic residues. 3',5'-cyclic AMP is bound by residues Leu154–Pro275, Glu223, Arg232, Phe276–Ala418, Glu352, and Arg361.

Belongs to the cAMP-dependent kinase regulatory chain family. The inactive form of the enzyme is composed of two regulatory chains and two catalytic chains. Activation by cAMP produces two active catalytic monomers and a regulatory dimer that binds four cAMP molecules. Interacts with PRKACA and PRKACB. Interacts with the phosphorylated form of PJA2. Forms a complex composed of PRKAR2B, GSK3B and GSKIP through GSKIP interaction; facilitates PKA-induced phosphorylation and regulates GSK3B activity. Phosphorylated by the activated catalytic chain. As to expression, four types of regulatory chains are found: I-alpha, I-beta, II-alpha, and II-beta. Their expression varies among tissues and is in some cases constitutive and in others inducible.

Its subcellular location is the cytoplasm. The protein resides in the cell membrane. Its function is as follows. Regulatory subunit of the cAMP-dependent protein kinases involved in cAMP signaling in cells. Type II regulatory chains mediate membrane association by binding to anchoring proteins, including the MAP2 kinase. The sequence is that of cAMP-dependent protein kinase type II-beta regulatory subunit (PRKAR2B) from Homo sapiens (Human).